Reading from the N-terminus, the 272-residue chain is Undecaprenyl-diphosphatase (272 aa).

Helical transmembrane passes span 1–21 (MSTL…FLPI), 39–59 (QGLA…MMYF), 91–111 (WWIL…KDFI), 117–137 (SALV…FADI), 151–171 (LGLK…IPGT), 196–216 (FLLS…KLIL), 228–248 (LGSL…LILL), and 251–271 (LGMM…LWFI).

Belongs to the UppP family.

It localises to the cell inner membrane. It catalyses the reaction di-trans,octa-cis-undecaprenyl diphosphate + H2O = di-trans,octa-cis-undecaprenyl phosphate + phosphate + H(+). Catalyzes the dephosphorylation of undecaprenyl diphosphate (UPP). Confers resistance to bacitracin. This chain is Undecaprenyl-diphosphatase, found in Colwellia psychrerythraea (strain 34H / ATCC BAA-681) (Vibrio psychroerythus).